Reading from the N-terminus, the 199-residue chain is Large ribosomal subunit protein uL4 (199 aa).

It belongs to the universal ribosomal protein uL4 family. Part of the 50S ribosomal subunit.

Its function is as follows. One of the primary rRNA binding proteins, this protein initially binds near the 5'-end of the 23S rRNA. It is important during the early stages of 50S assembly. It makes multiple contacts with different domains of the 23S rRNA in the assembled 50S subunit and ribosome. Forms part of the polypeptide exit tunnel. This Aquifex aeolicus (strain VF5) protein is Large ribosomal subunit protein uL4.